The chain runs to 140 residues: Perlin matrix protein (140 aa).

Positions 1–26 (MTCTLRLTVAALVLLGICHLSRPVAA) are cleaved as a signal peptide.

This sequence belongs to the N16 matrix protein family. As to quaternary structure, heterooligomer; disulfide-linked. Pif97, Pif80, N16 and other proteins form a complex. As to expression, component of conchiolin, the organic matrix of nacre. Only expressed in the dorsal region of the mantle.

Its subcellular location is the secreted. The protein resides in the extracellular space. It is found in the extracellular matrix. Its function is as follows. May be specifically involved in the formation of the nacreous layer. The polypeptide is Perlin matrix protein (Margaritifera margaritifera (Freshwater pearl mussel)).